A 271-amino-acid chain; its full sequence is Thiosulfate sulfurtransferase (271 aa).

Rhodanese domains follow at residues 21-129 (GAPE…ALDR) and 159-270 (GAAD…TPVE). The active-site Cysteine persulfide intermediate is cysteine 230.

It localises to the cytoplasm. It carries out the reaction thiosulfate + hydrogen cyanide = thiocyanate + sulfite + 2 H(+). In terms of biological role, catalyzes the sulfur transfer reaction from thiosulfate to cyanide, thus converting cyanide to the less toxic thiocyanate. Contributes to P.aeruginosa survival under cyanogenic conditions, and thus provides the bacterium with a defense mechanism against endogenous cyanide toxicity. Is the main cytoplasmic rhodanese in P.aeruginosa, accounting for 90% of total rhodanese activity. The sequence is that of Thiosulfate sulfurtransferase from Pseudomonas aeruginosa (strain ATCC 15692 / DSM 22644 / CIP 104116 / JCM 14847 / LMG 12228 / 1C / PRS 101 / PAO1).